Reading from the N-terminus, the 439-residue chain is tRNA-2-methylthio-N(6)-dimethylallyladenosine synthase (439 aa).

The MTTase N-terminal domain maps to 1–117; that stretch reads MKFYIRTFGC…IGNLVKRALN (117 aa). Cys-10, Cys-46, Cys-80, Cys-153, Cys-157, and Cys-160 together coordinate [4Fe-4S] cluster. A Radical SAM core domain is found at 139–371; it reads PISKHHAWIT…MELQKRINLE (233 aa). The TRAM domain maps to 369-436; that stretch reads NLEENEKYLE…PGPLYGEVVN (68 aa).

The protein belongs to the methylthiotransferase family. MiaB subfamily. Monomer. It depends on [4Fe-4S] cluster as a cofactor.

Its subcellular location is the cytoplasm. It catalyses the reaction N(6)-dimethylallyladenosine(37) in tRNA + (sulfur carrier)-SH + AH2 + 2 S-adenosyl-L-methionine = 2-methylsulfanyl-N(6)-dimethylallyladenosine(37) in tRNA + (sulfur carrier)-H + 5'-deoxyadenosine + L-methionine + A + S-adenosyl-L-homocysteine + 2 H(+). Catalyzes the methylthiolation of N6-(dimethylallyl)adenosine (i(6)A), leading to the formation of 2-methylthio-N6-(dimethylallyl)adenosine (ms(2)i(6)A) at position 37 in tRNAs that read codons beginning with uridine. The sequence is that of tRNA-2-methylthio-N(6)-dimethylallyladenosine synthase from Petrotoga mobilis (strain DSM 10674 / SJ95).